Here is a 222-residue protein sequence, read N- to C-terminus: MRVSKSLILITLSALVISFAEAYDPSPLQDFCVAIDDLKNGVFVNGKFCKDPKQAKAEDFFFSGLNQAGSTNNKVRSNVTTVNVDQIPGLNTMGISLVRIDYAPYGQNPPHTHPRATEILVLIEGTLYVGFVSSNQDNNRLFAKVLYPGDVFVFPIGMIHFQVNIGKTPAVAFAGLSSQNAGVITIADTVFGSTPPINPDILAQAFQLDVNIVEDLEAKFRN.

A signal peptide spans 1–18; the sequence is MRVSKSLILITLSALVIS. An intrachain disulfide couples C32 to C49. A Cupin type-1 domain is found at 63–214; the sequence is SGLNQAGSTN…AFQLDVNIVE (152 aa). Residue N78 is glycosylated (N-linked (GlcNAc...) asparagine). H111, H113, E118, and H160 together coordinate Mn(2+).

It belongs to the germin family. As to quaternary structure, oligomer (believed to be a pentamer but probably hexamer).

The protein localises to the secreted. It localises to the extracellular space. The protein resides in the apoplast. In terms of biological role, may play a role in plant defense. Probably has no oxalate oxidase activity even if the active site is conserved. This is Germin-like protein subfamily 1 member 13 (GLP6) from Arabidopsis thaliana (Mouse-ear cress).